The following is a 291-amino-acid chain: Pyridoxal 5'-phosphate synthase subunit PdxS (291 aa).

Residue Asp23 coordinates D-ribose 5-phosphate. Catalysis depends on Lys80, which acts as the Schiff-base intermediate with D-ribose 5-phosphate. Gly152 serves as a coordination point for D-ribose 5-phosphate. Arg164 lines the D-glyceraldehyde 3-phosphate pocket. D-ribose 5-phosphate-binding positions include Gly213 and 234-235; that span reads GS.

Belongs to the PdxS/SNZ family. In terms of assembly, in the presence of PdxT, forms a dodecamer of heterodimers.

The enzyme catalyses aldehydo-D-ribose 5-phosphate + D-glyceraldehyde 3-phosphate + L-glutamine = pyridoxal 5'-phosphate + L-glutamate + phosphate + 3 H2O + H(+). It participates in cofactor biosynthesis; pyridoxal 5'-phosphate biosynthesis. In terms of biological role, catalyzes the formation of pyridoxal 5'-phosphate from ribose 5-phosphate (RBP), glyceraldehyde 3-phosphate (G3P) and ammonia. The ammonia is provided by the PdxT subunit. Can also use ribulose 5-phosphate and dihydroxyacetone phosphate as substrates, resulting from enzyme-catalyzed isomerization of RBP and G3P, respectively. This chain is Pyridoxal 5'-phosphate synthase subunit PdxS, found in Bifidobacterium longum (strain NCC 2705).